Here is a 155-residue protein sequence, read N- to C-terminus: Troponin C, isoform 2 (155 aa).

4 EF-hand domains span residues 11-46 (EQIA…MGQP), 47-82 (FDRQ…FIVE), 87-122 (AMQK…LDDQ), and 123-155 (LTEQ…MTGE). Residues D60, D62, S64, R66, and E71 each contribute to the Ca(2+) site. Ca(2+) contacts are provided by D136, D138, S140, T142, and E147.

Belongs to the troponin C family. Accumulates almost exclusively in larval muscles.

The polypeptide is Troponin C, isoform 2 (TpnC47D) (Drosophila melanogaster (Fruit fly)).